Here is a 636-residue protein sequence, read N- to C-terminus: 1-deoxy-D-xylulose-5-phosphate synthase (636 aa).

Thiamine diphosphate-binding positions include His75 and 116–118; that span reads AHS. Residue Asp147 participates in Mg(2+) binding. Thiamine diphosphate contacts are provided by residues 148–149, Asn177, Tyr288, and Glu370; that span reads GA. Asn177 is a Mg(2+) binding site.

It belongs to the transketolase family. DXPS subfamily. Homodimer. Requires Mg(2+) as cofactor. It depends on thiamine diphosphate as a cofactor.

The catalysed reaction is D-glyceraldehyde 3-phosphate + pyruvate + H(+) = 1-deoxy-D-xylulose 5-phosphate + CO2. It participates in metabolic intermediate biosynthesis; 1-deoxy-D-xylulose 5-phosphate biosynthesis; 1-deoxy-D-xylulose 5-phosphate from D-glyceraldehyde 3-phosphate and pyruvate: step 1/1. Catalyzes the acyloin condensation reaction between C atoms 2 and 3 of pyruvate and glyceraldehyde 3-phosphate to yield 1-deoxy-D-xylulose-5-phosphate (DXP). The protein is 1-deoxy-D-xylulose-5-phosphate synthase of Ralstonia nicotianae (strain ATCC BAA-1114 / GMI1000) (Ralstonia solanacearum).